A 97-amino-acid polypeptide reads, in one-letter code: UPF0235 protein HD_0778 (97 aa).

This sequence belongs to the UPF0235 family.

The polypeptide is UPF0235 protein HD_0778 (Haemophilus ducreyi (strain 35000HP / ATCC 700724)).